The following is a 1379-amino-acid chain: DNA-directed RNA polymerase subunit beta (1379 aa).

Belongs to the RNA polymerase beta chain family. As to quaternary structure, the RNAP catalytic core consists of 2 alpha, 1 beta, 1 beta' and 1 omega subunit. When a sigma factor is associated with the core the holoenzyme is formed, which can initiate transcription.

It carries out the reaction RNA(n) + a ribonucleoside 5'-triphosphate = RNA(n+1) + diphosphate. DNA-dependent RNA polymerase catalyzes the transcription of DNA into RNA using the four ribonucleoside triphosphates as substrates. This is DNA-directed RNA polymerase subunit beta from Allorhizobium ampelinum (strain ATCC BAA-846 / DSM 112012 / S4) (Agrobacterium vitis (strain S4)).